The chain runs to 310 residues: HTH-type transcriptional regulator CbbR (310 aa).

Positions 7-64 (ITLKQLRALVAVAGSASLTGGATRLGLTPPAIHSQIRNLEEAFGVPLLHRPPETGSFT) constitute an HTH lysR-type domain. Residues 24-43 (LTGGATRLGLTPPAIHSQIR) constitute a DNA-binding region (H-T-H motif).

Belongs to the LysR transcriptional regulatory family.

In terms of biological role, transcriptional activator for the cbb operon for RuBisCO and other Calvin cycle genes. The sequence is that of HTH-type transcriptional regulator CbbR (cbbR) from Cereibacter sphaeroides (Rhodobacter sphaeroides).